The primary structure comprises 365 residues: Class I histocompatibility antigen, Gogo-C*0101/C*0102 alpha chain (365 aa).

The first 24 residues, 1-24, serve as a signal peptide directing secretion; the sequence is MRVMAPRTLILLLSGALALTETWA. The alpha-1 stretch occupies residues 25 to 114; that stretch reads GSHSMRYFFT…LRGYYNQSED (90 aa). Over 25-308 the chain is Extracellular; it reads GSHSMRYFFT…EPSSQPTIPI (284 aa). The N-linked (GlcNAc...) asparagine glycan is linked to N110. An alpha-2 region spans residues 115-206; sequence GSHTFQRMYG…ENGKETLQRA (92 aa). Disulfide bonds link C125–C188 and C227–C283. The alpha-3 stretch occupies residues 207–298; sequence DPPKTHVTHH…GLLEPLTLRW (92 aa). The region spanning 209–297 is the Ig-like C1-type domain; it reads PKTHVTHHPI…KGLLEPLTLR (89 aa). The segment at 299–308 is connecting peptide; sequence EPSSQPTIPI. The chain crosses the membrane as a helical span at residues 309–332; that stretch reads VGIVAGLAVLAVVFTGTVVAAVMC. Residues 333–365 are Cytoplasmic-facing; the sequence is RRKSSGGKGGSCSQAACSNSAQGSDESLIACKA. S356 and S359 each carry phosphoserine.

The protein belongs to the MHC class I family. Heterodimer of an alpha chain and a beta chain (beta-2-microglobulin).

It is found in the membrane. In terms of biological role, involved in the presentation of foreign antigens to the immune system. The protein is Class I histocompatibility antigen, Gogo-C*0101/C*0102 alpha chain of Gorilla gorilla gorilla (Western lowland gorilla).